The primary structure comprises 229 residues: Ras-related protein rab-39 (229 aa).

Residue 73–77 (DTAGQ) participates in GTP binding. S-geranylgeranyl cysteine attachment occurs at residues Cys227 and Cys229. Cys229 carries the cysteine methyl ester modification.

The protein belongs to the small GTPase superfamily. Rab family. Interacts (in GTP-bound form) with Ras association domain-containing protein rsf-1.

It is found in the cell membrane. Its subcellular location is the cytoplasmic vesicle membrane. It localises to the golgi apparatus. Small GTPases Rab involved in autophagy. The small GTPases Rab are key regulators of intracellular membrane trafficking, from the formation of transport vesicles to their fusion with membranes. Rabs cycle between an inactive GDP-bound form and an active GTP-bound form that is able to recruit to membranes different sets of downstream effectors directly responsible for vesicle formation, movement, tethering and fusion. Involved in positively regulating the oxidative stress response, perhaps in concert with the Ras association domain-containing protein rsf-1. The chain is Ras-related protein rab-39 from Caenorhabditis elegans.